Reading from the N-terminus, the 121-residue chain is Small ribosomal subunit protein uS13 (121 aa).

Residues 91 to 121 form a disordered region; that stretch reads HRMSLPVRGQRTRTNARTRRGSRKTVAGRKK. The segment covering 100–121 has biased composition (basic residues); the sequence is QRTRTNARTRRGSRKTVAGRKK.

Belongs to the universal ribosomal protein uS13 family. As to quaternary structure, part of the 30S ribosomal subunit. Forms a loose heterodimer with protein S19. Forms two bridges to the 50S subunit in the 70S ribosome.

Located at the top of the head of the 30S subunit, it contacts several helices of the 16S rRNA. In the 70S ribosome it contacts the 23S rRNA (bridge B1a) and protein L5 of the 50S subunit (bridge B1b), connecting the 2 subunits; these bridges are implicated in subunit movement. Contacts the tRNAs in the A and P-sites. This chain is Small ribosomal subunit protein uS13, found in Prochlorococcus marinus (strain MIT 9515).